Here is a 132-residue protein sequence, read N- to C-terminus: uncharacterized protein (132 aa).

Helical transmembrane passes span 7-29 (LALL…PTLF), 44-62 (VFPV…SLFL), 69-88 (LFLS…EFIV), and 108-130 (GVSM…ILIF).

It localises to the cell membrane. This is an uncharacterized protein from Aquifex aeolicus (strain VF5).